The primary structure comprises 312 residues: MAPKRLRIGTRASQLALWQANWTKSELEARYPGIQVELVKIKTMGDKILDVPLAQVGGKGLFVKEIEEAMLRGEIDLAVHSMKDVPTEFPEGLGLVVTTKREDPRDAFISDKVTFSELRQGARIGTSALRRQAQLLKARPDLEMVIIRGNVETRIRKLKEDNLDAVILAAAGLNRLGFTDVVTELLDTDFSIPAIGQGALGLECRLDDNATIEALAFLNHADTAAAVAAERALLKRCEGGCQVPIAAHGTVSGDTLTLVGFIASVDGKQTVRDRISGSTADAVKLGTELADRLLAAGGKAILEDVYQREIAH.

S-(dipyrrolylmethanemethyl)cysteine is present on Cys241.

Belongs to the HMBS family. As to quaternary structure, monomer. The cofactor is dipyrromethane.

The enzyme catalyses 4 porphobilinogen + H2O = hydroxymethylbilane + 4 NH4(+). The protein operates within porphyrin-containing compound metabolism; protoporphyrin-IX biosynthesis; coproporphyrinogen-III from 5-aminolevulinate: step 2/4. Functionally, tetrapolymerization of the monopyrrole PBG into the hydroxymethylbilane pre-uroporphyrinogen in several discrete steps. This chain is Porphobilinogen deaminase, found in Trichlorobacter lovleyi (strain ATCC BAA-1151 / DSM 17278 / SZ) (Geobacter lovleyi).